Here is a 60-residue protein sequence, read N- to C-terminus: Large ribosomal subunit protein uL30 (60 aa).

Belongs to the universal ribosomal protein uL30 family. In terms of assembly, part of the 50S ribosomal subunit.

The sequence is that of Large ribosomal subunit protein uL30 from Shewanella loihica (strain ATCC BAA-1088 / PV-4).